Reading from the N-terminus, the 457-residue chain is B-cell linker protein (457 aa).

The tract at residues 38 to 306 (KLKVKGPPSV…FPPTQKPVLQ (269 aa)) is disordered. Acidic residues predominate over residues 57-74 (PADEEEQWSDDFDSDYEN). Phosphotyrosine; by SYK occurs at positions 72, 84, 96, 178, and 189. The segment covering 172 to 187 (LEDEADYVVPVEDNDE) has biased composition (acidic residues). Composition is skewed to polar residues over residues 206–218 (VNRSTKPNSSSKH) and 256–270 (PLKTTPVPSLQNASN). Basic and acidic residues predominate over residues 272–290 (CEEKPVPAERHRGSSHRQD). Residues 347-454 (WYAGACDRKS…KDSTRLKYAV (108 aa)) form the SH2 domain.

In terms of assembly, associates with PLCG1, VAV1 and NCK1 in a B-cell antigen receptor-dependent fashion. Interacts with VAV3, PLCG2 and GRB2. Interacts through its SH2 domain with CD79A. Interacts (via SH2 domain) with SYK; phosphorylated and activated by SYK. Interacts (via SH2 domain) with SCIMP; this interaction is dependent on phosphorylation of SCIMP 'Tyr-120'. Following BCR activation, phosphorylated on tyrosine residues by SYK and LYN. When phosphorylated, serves as a scaffold to assemble downstream targets of antigen activation, including PLCG1, VAV1, GRB2 and NCK1. Phosphorylation of Tyr-84, Tyr-178 and Tyr-189 facilitates PLCG1 binding. Phosphorylation of Tyr-96 facilitates BTK binding. Phosphorylation of Tyr-72 facilitates VAV1 and NCK1 binding. Phosphorylation is required for both Ca(2+) and MAPK signaling pathways.

The protein resides in the cytoplasm. Its subcellular location is the cell membrane. Functions as a central linker protein, downstream of the B-cell receptor (BCR), bridging the SYK kinase to a multitude of signaling pathways and regulating biological outcomes of B-cell function and development. Plays a role in the activation of ERK/EPHB2, MAP kinase p38 and JNK. Modulates AP1 activation. Important for the activation of NF-kappa-B and NFAT. Plays an important role in BCR-mediated PLCG1 and PLCG2 activation and Ca(2+) mobilization and is required for trafficking of the BCR to late endosomes. However, does not seem to be required for pre-BCR-mediated activation of MAP kinase and phosphatidyl-inositol 3 (PI3) kinase signaling. May be required for the RAC1-JNK pathway. Plays a critical role in orchestrating the pro-B cell to pre-B cell transition. May play an important role in BCR-induced B-cell apoptosis. This is B-cell linker protein (Blnk) from Rattus norvegicus (Rat).